A 356-amino-acid chain; its full sequence is Cyclin-D2-2 (356 aa).

Positions 325–343 (LGSSQSNSNNKDYNSQDSA) are enriched in polar residues. A disordered region spans residues 325-356 (LGSSQSNSNNKDYNSQDSAPASKRRRLNTTPI). The segment covering 346-356 (SKRRRLNTTPI) has biased composition (basic residues).

This sequence belongs to the cyclin family. Cyclin D subfamily.

This chain is Cyclin-D2-2 (CYCD2-2), found in Oryza sativa subsp. japonica (Rice).